Consider the following 231-residue polypeptide: 2-C-methyl-D-erythritol 4-phosphate cytidylyltransferase (231 aa).

The protein belongs to the IspD/TarI cytidylyltransferase family. IspD subfamily.

It carries out the reaction 2-C-methyl-D-erythritol 4-phosphate + CTP + H(+) = 4-CDP-2-C-methyl-D-erythritol + diphosphate. Its pathway is isoprenoid biosynthesis; isopentenyl diphosphate biosynthesis via DXP pathway; isopentenyl diphosphate from 1-deoxy-D-xylulose 5-phosphate: step 2/6. Its function is as follows. Catalyzes the formation of 4-diphosphocytidyl-2-C-methyl-D-erythritol from CTP and 2-C-methyl-D-erythritol 4-phosphate (MEP). This chain is 2-C-methyl-D-erythritol 4-phosphate cytidylyltransferase, found in Mycobacterium bovis (strain BCG / Pasteur 1173P2).